The primary structure comprises 230 residues: 5'-methylthioadenosine/S-adenosylhomocysteine nucleosidase (230 aa).

Glutamate 12 functions as the Proton acceptor in the catalytic mechanism. Substrate contacts are provided by residues glycine 78, isoleucine 152, and 173 to 174 (ME). Catalysis depends on aspartate 197, which acts as the Proton donor.

This sequence belongs to the PNP/UDP phosphorylase family. MtnN subfamily.

It carries out the reaction S-adenosyl-L-homocysteine + H2O = S-(5-deoxy-D-ribos-5-yl)-L-homocysteine + adenine. The catalysed reaction is S-methyl-5'-thioadenosine + H2O = 5-(methylsulfanyl)-D-ribose + adenine. The enzyme catalyses 5'-deoxyadenosine + H2O = 5-deoxy-D-ribose + adenine. It participates in amino-acid biosynthesis; L-methionine biosynthesis via salvage pathway; S-methyl-5-thio-alpha-D-ribose 1-phosphate from S-methyl-5'-thioadenosine (hydrolase route): step 1/2. Functionally, catalyzes the irreversible cleavage of the glycosidic bond in both 5'-methylthioadenosine (MTA) and S-adenosylhomocysteine (SAH/AdoHcy) to adenine and the corresponding thioribose, 5'-methylthioribose and S-ribosylhomocysteine, respectively. Also cleaves 5'-deoxyadenosine, a toxic by-product of radical S-adenosylmethionine (SAM) enzymes, into 5-deoxyribose and adenine. The chain is 5'-methylthioadenosine/S-adenosylhomocysteine nucleosidase from Actinobacillus succinogenes (strain ATCC 55618 / DSM 22257 / CCUG 43843 / 130Z).